The following is a 556-amino-acid chain: Formate--tetrahydrofolate ligase (556 aa).

65–72 (TPAGEGKS) lines the ATP pocket.

This sequence belongs to the formate--tetrahydrofolate ligase family.

The enzyme catalyses (6S)-5,6,7,8-tetrahydrofolate + formate + ATP = (6R)-10-formyltetrahydrofolate + ADP + phosphate. It participates in one-carbon metabolism; tetrahydrofolate interconversion. The polypeptide is Formate--tetrahydrofolate ligase (Streptococcus equi subsp. zooepidemicus (strain H70)).